The sequence spans 88 residues: MDGFDKTMKFSIQDEKQSVHVNDVLLTVYDALQEKGYNPINQIVGYLLSGDPAYIPRHKDARSIVRKLERDEIIEELVKSYLKHHREE.

Belongs to the UPF0297 family.

This is UPF0297 protein BcerKBAB4_4234 from Bacillus mycoides (strain KBAB4) (Bacillus weihenstephanensis).